Consider the following 108-residue polypeptide: MIPGEIRVNAALGDIELNAGRETKTIQVANHGDRPVQVGSHYHFYEVNEALRFARKETLGFRLNIPAGMAVRFEPGQSRTVELVAFAGKREIYGFHGKVMGKLESEKK.

The protein belongs to the urease beta subunit family. As to quaternary structure, probable heterotrimer of UreA (gamma), UreB (beta) and UreC (alpha) subunits. Three heterotrimers associate to form the active enzyme. The trimeric urease interacts with an accessory complex composed of UreD, UreF and UreG, which is required for the assembly of the nickel containing metallocenter of UreC. The UreE protein may also play a direct role in nickel transfer to the urease apoprotein.

The protein resides in the cytoplasm. The catalysed reaction is urea + 2 H2O + H(+) = hydrogencarbonate + 2 NH4(+). It participates in nitrogen metabolism; urea degradation; CO(2) and NH(3) from urea (urease route): step 1/1. This is Urease subunit beta from Proteus mirabilis (strain HI4320).